The chain runs to 291 residues: NAD kinase (291 aa).

The Proton acceptor role is filled by Asp-73. NAD(+) is bound by residues 73–74 (DG), 147–148 (ND), Arg-175, Asp-177, and Gln-246.

This sequence belongs to the NAD kinase family. The cofactor is a divalent metal cation.

It is found in the cytoplasm. It carries out the reaction NAD(+) + ATP = ADP + NADP(+) + H(+). Its function is as follows. Involved in the regulation of the intracellular balance of NAD and NADP, and is a key enzyme in the biosynthesis of NADP. Catalyzes specifically the phosphorylation on 2'-hydroxyl of the adenosine moiety of NAD to yield NADP. This chain is NAD kinase, found in Chromobacterium violaceum (strain ATCC 12472 / DSM 30191 / JCM 1249 / CCUG 213 / NBRC 12614 / NCIMB 9131 / NCTC 9757 / MK).